A 132-amino-acid chain; its full sequence is Fatty acid-binding protein, intestinal (132 aa).

The residue at position 2 (Ala-2) is an N-acetylalanine. Trp-83 and Arg-107 together coordinate hexadecanoate. Trp-83 and Arg-107 together coordinate tetradecanoate.

The protein belongs to the calycin superfamily. Fatty-acid binding protein (FABP) family. In terms of tissue distribution, expressed in the small intestine and at much lower levels in the large intestine. Highest expression levels in the jejunum.

Its subcellular location is the cytoplasm. Its function is as follows. FABPs are thought to play a role in the intracellular transport of long-chain fatty acids and their acyl-CoA esters. FABP2 is probably involved in triglyceride-rich lipoprotein synthesis. Binds saturated long-chain fatty acids with a high affinity, but binds with a lower affinity to unsaturated long-chain fatty acids. FABP2 may also help maintain energy homeostasis by functioning as a lipid sensor. The polypeptide is Fatty acid-binding protein, intestinal (FABP2) (Homo sapiens (Human)).